The sequence spans 513 residues: Sucrose transport protein SUC1 (513 aa).

The segment covering methionine 1–lysine 11 has biased composition (basic and acidic residues). Residues methionine 1–glutamine 26 are disordered. Residues methionine 1–lysine 32 lie on the Cytoplasmic side of the membrane. The residue at position 20 (serine 20) is a Phosphoserine. A helical membrane pass occupies residues isoleucine 33–leucine 53. Topologically, residues leucine 54–tryptophan 67 are extracellular. The helical transmembrane segment at serine 68–phenylalanine 88 threads the bilayer. Residues histidine 89–arginine 101 are Cytoplasmic-facing. Residues proline 102–alanine 122 form a helical membrane-spanning segment. Over aspartate 123 to arginine 139 the chain is Extracellular. The helical transmembrane segment at alanine 140 to glycine 160 threads the bilayer. Residues proline 161–arginine 178 are Cytoplasmic-facing. The chain crosses the membrane as a helical span at residues valine 179–glycine 199. Over serine 200–lysine 224 the chain is Extracellular. The helical transmembrane segment at threonine 225 to valine 245 threads the bilayer. Over asparagine 246–proline 282 the chain is Cytoplasmic. Residues methionine 283–phenylalanine 303 traverse the membrane as a helical segment. At aspartate 304–glycine 334 the chain is on the extracellular side. The chain crosses the membrane as a helical span at residues alanine 335–isoleucine 355. Residues glycine 356–leucine 365 are Cytoplasmic-facing. Residues tryptophan 366–phenylalanine 386 traverse the membrane as a helical segment. The Extracellular segment spans residues alanine 387–alanine 408. The chain crosses the membrane as a helical span at residues leucine 409 to leucine 429. Residues alanine 430 to glutamine 441 lie on the Cytoplasmic side of the membrane. The helical transmembrane segment at glycine 442–glycine 462 threads the bilayer. The Extracellular segment spans residues glycine 463–asparagine 474. The helical transmembrane segment at leucine 475–valine 495 threads the bilayer. The Cytoplasmic portion of the chain corresponds to leucine 496–histidine 513.

Belongs to the glycoside-pentoside-hexuronide (GPH) cation symporter transporter (TC 2.A.2.4) family. As to expression, expressed in flowers (at protein level). Highly expressed in pollen. Expressed in pollen tubes and root vascular cylinder, pericycle and endodermis.

It localises to the membrane. The enzyme catalyses sucrose(out) + H(+)(out) = sucrose(in) + H(+)(in). Its pathway is glycan biosynthesis; sucrose metabolism. With respect to regulation, inhibited by DEPC, protonophores (e.g. dinitrophenol and carbonyl cyanide m-chlorophenyl-hydrazone (CCCP)), and SH group inhibitors (e.g. N-ethylmaleimide (NEM) and p-chloromercuriphenyl sulphonic acid (PCMPS)). Functionally, responsible for the transport of sucrose into the cell, with the concomitant uptake of protons (symport system). This transport is both voltage- and energy-dependent. Can also transport other glucosides such as maltose, alpha-phenylglucoside and beta-phenylglucoside. May also transport biotin. Required for normal pollen germination and anthocyanin accumulation induced by sucrose. This chain is Sucrose transport protein SUC1, found in Arabidopsis thaliana (Mouse-ear cress).